The following is a 523-amino-acid chain: 2-isopropylmalate synthase (523 aa).

The Pyruvate carboxyltransferase domain occupies 5 to 267; that stretch reads VIIFDTTLRD…HTRINHQEIW (263 aa). The Mn(2+) site is built by Asp-14, His-202, His-204, and Asn-238. The regulatory domain stretch occupies residues 392-523; that stretch reads RLDYFSVQSG…QNKENNKETV (132 aa).

This sequence belongs to the alpha-IPM synthase/homocitrate synthase family. LeuA type 1 subfamily. Homodimer. Mn(2+) serves as cofactor.

The protein localises to the cytoplasm. It carries out the reaction 3-methyl-2-oxobutanoate + acetyl-CoA + H2O = (2S)-2-isopropylmalate + CoA + H(+). It participates in amino-acid biosynthesis; L-leucine biosynthesis; L-leucine from 3-methyl-2-oxobutanoate: step 1/4. Functionally, catalyzes the condensation of the acetyl group of acetyl-CoA with 3-methyl-2-oxobutanoate (2-ketoisovalerate) to form 3-carboxy-3-hydroxy-4-methylpentanoate (2-isopropylmalate). This is 2-isopropylmalate synthase from Citrobacter koseri (strain ATCC BAA-895 / CDC 4225-83 / SGSC4696).